Consider the following 403-residue polypeptide: F-box protein At1g60400 (403 aa).

An F-box domain is found at 13 to 59; that stretch reads IDRLSALPEHLLCRILSELSTKDSVRTSVLSKHWRNLWLHVPVLELE.

The protein is F-box protein At1g60400 of Arabidopsis thaliana (Mouse-ear cress).